A 328-amino-acid chain; its full sequence is Protein FAM76B (328 aa).

The segment at 143-232 (KEQRKGLGSS…ITQSMDSGGT (90 aa)) is disordered. Residues 148–159 (GLGSSHSNSSSL) are compositionally biased toward low complexity. The span at 165–183 (QRHHHHHQHHRHGSSHHKI) shows a compositional bias: basic residues. Residues 185–201 (GNLSPEQDQGLWKQSIQ) are compositionally biased toward polar residues. Ser188 carries the post-translational modification Phosphoserine. Over residues 203 to 213 (ETPKKKPKLET) the composition is skewed to basic and acidic residues. Over residues 216–232 (SNGDSSSITQSMDSGGT) the composition is skewed to polar residues. A coiled-coil region spans residues 237-316 (LISQLKEEVM…KQVAALSKGK (80 aa)).

Belongs to the FAM76 family. As to expression, highly expressed in hematopoietic and immune systems including in the thymus, spleen, kidney, and blood vessel.

Plays a role in hematopoiesis and immune system development, and participates in the inflammatory response. This is Protein FAM76B (fam76b) from Danio rerio (Zebrafish).